A 457-amino-acid chain; its full sequence is PDZ and LIM domain protein 7 (457 aa).

Positions 1 to 85 (MDSFKVVLEG…RLSLGLSRAQ (85 aa)) constitute a PDZ domain. S78 carries the phosphoserine modification. 2 disordered regions span residues 81 to 132 (LSRA…LSQN) and 186 to 226 (FMKK…PWAV). T96 is modified (phosphothreonine). R103 carries the post-translational modification Asymmetric dimethylarginine. S111 is modified (phosphoserine). S247 bears the Phosphoserine mark. 3 consecutive LIM zinc-binding domains span residues 280-338 (PVCH…VRYA), 339-398 (PSCA…MFGT), and 399-457 (KCRG…FSHV).

Binds via its LIM zinc-binding 3 domain (LIM 3) domain to endocytic codes of INSR, but not with those of IGF1R, LDLR, TFRC, or EGFR. Interacts with various PKC isoforms through the LIM zinc-binding domains. Binds to RET in a phosphorylation-independent manner via its LIM zinc-binding 2 domain (LIM 2). Probably part of a complex with SHC and the RET dimer. Interacts with TPM2, TBX4 and TBX5. Interacts (via LIM domains) with SIPA1L1. Expressed in kidney, heart, brain, lung, and skeletal muscle. Overexpression results in the synthesis of an unidentified soluble factor which acts on cells in the osteoblast lineage causing them to differentiate and secrete BMP-2.

It is found in the cytoplasm. The protein localises to the cytoskeleton. May function as a scaffold on which the coordinated assembly of proteins can occur. May play a role as an adapter that, via its PDZ domain, localizes LIM-binding proteins to actin filaments of both skeletal muscle and nonmuscle tissues. Involved in both of the two fundamental mechanisms of bone formation, direct bone formation (e.g. embryonic flat bones mandible and cranium), and endochondral bone formation (e.g. embryonic long bone development). Plays a role during fracture repair. Involved in BMP6 signaling pathway. The protein is PDZ and LIM domain protein 7 (Pdlim7) of Rattus norvegicus (Rat).